Reading from the N-terminus, the 342-residue chain is L-lysine 2,3-aminomutase (342 aa).

In terms of domain architecture, Radical SAM core spans 106–329 (HKYHNRALLL…PKLAREIGGE (224 aa)). [4Fe-4S] cluster-binding residues include Cys-120, Cys-124, and Cys-127. The residue at position 332 (Lys-332) is an N6-(pyridoxal phosphate)lysine.

This sequence belongs to the radical SAM superfamily. KamA family. It depends on [4Fe-4S] cluster as a cofactor. The cofactor is pyridoxal 5'-phosphate.

The enzyme catalyses L-lysine = D-beta-lysine. Functionally, with EpmA is involved in the beta-lysylation step of the post-translational modification of translation elongation factor P (EF-P) on 'Lys-34'. EpmB appears to act before EpmA. Displays lysine 2,3-aminomutase activity, producing (R)-beta-lysine from (S)-alpha-lysine (L-lysine). Cannot use (S)-ornithine or (R)-alpha-lysine as a substrate. This Escherichia coli (strain K12) protein is L-lysine 2,3-aminomutase (epmB).